The primary structure comprises 305 residues: Protoheme IX farnesyltransferase (305 aa).

9 helical membrane passes run 38–58, 60–80, 110–130, 131–151, 161–181, 185–205, 227–247, 249–269, and 285–305; these read FITTFTGMWLAFYFTGMSFLG, LDIVLLTMIGSSLIIAGSCAI, AYAFGILLVVLGLIMLLMTTV, TSAVIGFIGVFTYAVLYTMWS, IGSVSGAVPPLIGWTAVTGTI, AWVLFMIMFIWQIPHFLSLAI, VTKRQIIIWTACLLPLPFFLG, LGWPIVALGTLLNIGWLVIGL, and FVYSLNYLTIFFVAMIIITLF.

This sequence belongs to the UbiA prenyltransferase family. Protoheme IX farnesyltransferase subfamily. Interacts with CtaA.

The protein resides in the cell membrane. It carries out the reaction heme b + (2E,6E)-farnesyl diphosphate + H2O = Fe(II)-heme o + diphosphate. It participates in porphyrin-containing compound metabolism; heme O biosynthesis; heme O from protoheme: step 1/1. Converts heme B (protoheme IX) to heme O by substitution of the vinyl group on carbon 2 of heme B porphyrin ring with a hydroxyethyl farnesyl side group. The chain is Protoheme IX farnesyltransferase from Bacillus pumilus (strain SAFR-032).